Reading from the N-terminus, the 277-residue chain is UPF0276 protein PSEEN3355 (277 aa).

This sequence belongs to the UPF0276 family.

The chain is UPF0276 protein PSEEN3355 from Pseudomonas entomophila (strain L48).